We begin with the raw amino-acid sequence, 65 residues long: Large ribosomal subunit protein bL35 (65 aa).

Residues 1–22 (MPKIKTVRGAAKRFKKTGKGGF) are disordered. The span at 10-22 (AAKRFKKTGKGGF) shows a compositional bias: basic residues.

The protein belongs to the bacterial ribosomal protein bL35 family.

The polypeptide is Large ribosomal subunit protein bL35 (Klebsiella pneumoniae (strain 342)).